A 452-amino-acid chain; its full sequence is Maltoporin (452 aa).

The first 25 residues, 1–25 (MMITLRKLPLAVAVAAGVMSAQAMA), serve as a signal peptide directing secretion.

The protein belongs to the porin LamB (TC 1.B.3) family. As to quaternary structure, homotrimer formed of three 18-stranded antiparallel beta-barrels, containing three independent channels.

Its subcellular location is the cell outer membrane. The enzyme catalyses beta-maltose(in) = beta-maltose(out). Functionally, involved in the transport of maltose and maltodextrins. The polypeptide is Maltoporin (Salmonella enteritidis PT4 (strain P125109)).